Reading from the N-terminus, the 228-residue chain is Probable octanoyltransferase (228 aa).

A BPL/LPL catalytic domain is found at 27 to 198 (SGGDDAFILV…AFEEVFEAKV (172 aa)). Substrate-binding positions include 65-72 (RGGDATYH), 129-131 (SIG), and 142-144 (GVA). The active-site Acyl-thioester intermediate is cysteine 160.

Belongs to the LipB family.

It is found in the cytoplasm. The enzyme catalyses octanoyl-[ACP] + L-lysyl-[protein] = N(6)-octanoyl-L-lysyl-[protein] + holo-[ACP] + H(+). Its pathway is protein modification; protein lipoylation via endogenous pathway; protein N(6)-(lipoyl)lysine from octanoyl-[acyl-carrier-protein]: step 1/2. Catalyzes the transfer of endogenously produced octanoic acid from octanoyl-acyl-carrier-protein onto the lipoyl domains of lipoate-dependent enzymes. Lipoyl-ACP can also act as a substrate although octanoyl-ACP is likely to be the physiological substrate. The sequence is that of Probable octanoyltransferase from Pyrobaculum calidifontis (strain DSM 21063 / JCM 11548 / VA1).